The sequence spans 101 residues: Small ribosomal subunit protein bS18c (101 aa).

This sequence belongs to the bacterial ribosomal protein bS18 family. As to quaternary structure, part of the 30S ribosomal subunit.

It is found in the plastid. It localises to the chloroplast. In Gossypium hirsutum (Upland cotton), this protein is Small ribosomal subunit protein bS18c.